The primary structure comprises 337 residues: Anthranilate phosphoribosyltransferase (337 aa).

Residues G80, 83-84, T88, 90-93, 108-116, and S120 contribute to the 5-phospho-alpha-D-ribose 1-diphosphate site; these read GD, NIST, and KHGNRAVSS. An anthranilate-binding site is contributed by G80. S92 contacts Mg(2+). N111 is a binding site for anthranilate. Anthranilate is bound at residue R166. Mg(2+) is bound by residues D224 and E225.

Belongs to the anthranilate phosphoribosyltransferase family. As to quaternary structure, homodimer. Mg(2+) is required as a cofactor.

The enzyme catalyses N-(5-phospho-beta-D-ribosyl)anthranilate + diphosphate = 5-phospho-alpha-D-ribose 1-diphosphate + anthranilate. The protein operates within amino-acid biosynthesis; L-tryptophan biosynthesis; L-tryptophan from chorismate: step 2/5. Catalyzes the transfer of the phosphoribosyl group of 5-phosphorylribose-1-pyrophosphate (PRPP) to anthranilate to yield N-(5'-phosphoribosyl)-anthranilate (PRA). This Anaeromyxobacter sp. (strain Fw109-5) protein is Anthranilate phosphoribosyltransferase.